The following is a 437-amino-acid chain: Enolase superfamily member DDB_G0284701 (437 aa).

The active-site Proton acceptor is lysine 217. Mn(2+) is bound by residues aspartate 251, glutamate 279, and aspartate 321. Aspartate 395 acts as the Proton donor in catalysis.

It belongs to the mandelate racemase/muconate lactonizing enzyme family.

This is Enolase superfamily member DDB_G0284701 from Dictyostelium discoideum (Social amoeba).